Reading from the N-terminus, the 193-residue chain is dCTP deaminase, dUMP-forming (193 aa).

DCTP-binding positions include 101–106 (KSSLGR), Asp-119, 127–129 (TLE), Gln-148, Tyr-162, and Gln-174. Glu-129 acts as the Proton donor/acceptor in catalysis. The segment at 162 to 184 (YGSKGTGSHYQGQRGPTPSRSYE) is disordered. The span at 167–183 (TGSHYQGQRGPTPSRSY) shows a compositional bias: polar residues.

This sequence belongs to the dCTP deaminase family. Homotrimer.

It carries out the reaction dCTP + 2 H2O = dUMP + NH4(+) + diphosphate. It participates in pyrimidine metabolism; dUMP biosynthesis; dUMP from dCTP: step 1/1. Bifunctional enzyme that catalyzes both the deamination of dCTP to dUTP and the hydrolysis of dUTP to dUMP without releasing the toxic dUTP intermediate. In Bifidobacterium longum (strain DJO10A), this protein is dCTP deaminase, dUMP-forming.